A 248-amino-acid chain; its full sequence is MADVAGTSNRDFRGREQRLFNSEQYNYNNSLNGEVSVWVYAYYSDGSVLVINKNSQYKVGISETFKALKEYREGQHNDSYDEYEVNQSIYYPNGGDARKFHSNAKPRAIQIIFSPSVNVRTIKMAKGNAVSVPDEYLQRSHPWEATGIKYRKIKRDGEIVGYSHYFELPHEYNSISLAVSGVHKNPSSYNVGSAHNVMDVFQSCDLALRFCNRYWAELELVNHYISPNAYPYLDINNHSYGVALSNRQ.

The signal sequence occupies residues 1-27; it reads MADVAGTSNRDFRGREQRLFNSEQYNY. N-linked (GlcNAc...) asparagine; by host glycans are attached at residues Asn-28, Asn-77, Asn-86, and Asn-237.

Its subcellular location is the host cytoplasm. In terms of biological role, major component of the virus occlusion bodies, which are large proteinaceous structures (polyhedra), that protect the virus from the outside environment for extended periods until they are ingested by insect larvae. The sequence is that of Polyhedrin from Bombyx mori cytoplasmic polyhedrosis virus (BmCPV).